Reading from the N-terminus, the 123-residue chain is Small ribosomal subunit protein uS13 (123 aa).

The segment at 95-123 (GLPVRGQSSKTNARTRKGPRRSVMSRKKK) is disordered. Residues 107-123 (ARTRKGPRRSVMSRKKK) are compositionally biased toward basic residues.

Belongs to the universal ribosomal protein uS13 family. In terms of assembly, part of the 30S ribosomal subunit. Forms a loose heterodimer with protein S19. Forms two bridges to the 50S subunit in the 70S ribosome.

In terms of biological role, located at the top of the head of the 30S subunit, it contacts several helices of the 16S rRNA. In the 70S ribosome it contacts the 23S rRNA (bridge B1a) and protein L5 of the 50S subunit (bridge B1b), connecting the 2 subunits; these bridges are implicated in subunit movement. Contacts the tRNAs in the A and P-sites. This is Small ribosomal subunit protein uS13 from Maridesulfovibrio salexigens (strain ATCC 14822 / DSM 2638 / NCIMB 8403 / VKM B-1763) (Desulfovibrio salexigens).